We begin with the raw amino-acid sequence, 66 residues long: UPF0337 protein spyM18_1212 (66 aa).

The protein belongs to the UPF0337 (CsbD) family.

The chain is UPF0337 protein spyM18_1212 from Streptococcus pyogenes serotype M18 (strain MGAS8232).